The sequence spans 237 residues: Probable transcriptional regulatory protein Fjoh_2560 (237 aa).

It belongs to the TACO1 family.

The protein resides in the cytoplasm. This Flavobacterium johnsoniae (strain ATCC 17061 / DSM 2064 / JCM 8514 / BCRC 14874 / CCUG 350202 / NBRC 14942 / NCIMB 11054 / UW101) (Cytophaga johnsonae) protein is Probable transcriptional regulatory protein Fjoh_2560.